Reading from the N-terminus, the 249-residue chain is Probable transcriptional regulatory protein Tfu_2096 (249 aa).

Belongs to the TACO1 family.

It localises to the cytoplasm. The sequence is that of Probable transcriptional regulatory protein Tfu_2096 from Thermobifida fusca (strain YX).